Here is a 71-residue protein sequence, read N- to C-terminus: DNA-directed RNA polymerase subunit Rpo10 (71 aa).

Cys6, Cys9, Cys52, and Cys53 together coordinate Zn(2+).

The protein belongs to the archaeal Rpo10/eukaryotic RPB10 RNA polymerase subunit family. In terms of assembly, part of the RNA polymerase complex. It depends on Zn(2+) as a cofactor.

The protein localises to the cytoplasm. The enzyme catalyses RNA(n) + a ribonucleoside 5'-triphosphate = RNA(n+1) + diphosphate. Its function is as follows. DNA-dependent RNA polymerase (RNAP) catalyzes the transcription of DNA into RNA using the four ribonucleoside triphosphates as substrates. The sequence is that of DNA-directed RNA polymerase subunit Rpo10 from Methanocella arvoryzae (strain DSM 22066 / NBRC 105507 / MRE50).